We begin with the raw amino-acid sequence, 450 residues long: UDP-N-acetylmuramoylalanine--D-glutamate ligase (450 aa).

119–125 (GSNGKTT) contacts ATP.

The protein belongs to the MurCDEF family.

The protein resides in the cytoplasm. It catalyses the reaction UDP-N-acetyl-alpha-D-muramoyl-L-alanine + D-glutamate + ATP = UDP-N-acetyl-alpha-D-muramoyl-L-alanyl-D-glutamate + ADP + phosphate + H(+). The protein operates within cell wall biogenesis; peptidoglycan biosynthesis. Cell wall formation. Catalyzes the addition of glutamate to the nucleotide precursor UDP-N-acetylmuramoyl-L-alanine (UMA). The protein is UDP-N-acetylmuramoylalanine--D-glutamate ligase of Bacillus cereus (strain Q1).